The primary structure comprises 320 residues: tRNA pseudouridine synthase B (320 aa).

Catalysis depends on Asp49, which acts as the Nucleophile.

This sequence belongs to the pseudouridine synthase TruB family. Type 1 subfamily.

It carries out the reaction uridine(55) in tRNA = pseudouridine(55) in tRNA. Responsible for synthesis of pseudouridine from uracil-55 in the psi GC loop of transfer RNAs. The polypeptide is tRNA pseudouridine synthase B (Bartonella bacilliformis (strain ATCC 35685 / KC583 / Herrer 020/F12,63)).